The primary structure comprises 817 residues: Dual specificity tyrosine-phosphorylation-regulated kinase mbk-2 (817 aa).

Disordered stretches follow at residues 1-46 (MAAL…HECP), 70-148 (PTSF…GPLG), 186-206 (GSYE…GSQQ), and 301-396 (LPNV…FRPE). The segment covering 7–25 (FTRNSRSYGQQPIDVTQQG) has biased composition (polar residues). 2 stretches are compositionally biased toward low complexity: residues 70–81 (PTSFSGASSSSS) and 97–111 (NLLG…SNSL). Polar residues-rich tracts occupy residues 122 to 143 (SGNT…TNNL) and 193 to 206 (GQAQ…GSQQ). The segment covering 303–318 (NVGTSSSNGSSNSSSG) has biased composition (low complexity). Over residues 327–351 (LMTQSIGGPNKHLSASHSTLNTAST) the composition is skewed to polar residues. Phosphoserine; by cdk-1 is present on serine 362. Over residues 364 to 392 (SNESLSRSHTSSSGGSQGGHNSNSGSNSG) the composition is skewed to low complexity. The Protein kinase domain maps to 461-774 (YEVLKVIGKG…PAQALKHKWL (314 aa)). ATP is bound by residues 467–475 (IGKGSFGQV) and lysine 490. The active-site Proton acceptor is aspartate 587. A Phosphotyrosine; by autocatalysis modification is found at tyrosine 621.

Belongs to the protein kinase superfamily. CMGC Ser/Thr protein kinase family. MNB/DYRK subfamily. As to quaternary structure, part of a complex, consisting of pseudophosphatases egg-3, egg-4, egg-5 and kinase mbk-2; this complex is required for the oocyte-to-zygote transition. Interacts (via Tyr-619 and Tyr-621) with egg-4 (via tyrosine-protein phosphatase domain) and egg-5 (via tyrosine-protein phosphatase domain); mbk-2 tyrosine phosphorylation enhances the interaction. The interaction inhibits mbk-2 kinase activity and is required for mbk-2 oocyte cortex localization. Interacts (via N-terminus) with egg-3 (via tyrosine-protein phosphatase domain); the interaction does not affect mbk-2 kinase activity, is enhanced by mbk-2 tyrosine phosphorylation status and requires prior binding of mbk-2 to egg-4 and egg-5. Mg(2+) serves as cofactor. Post-translationally, autophosphorylated. As to expression, in L1 larvae, expressed widely in the nervous system, including head neurons and the ventral nerve cord. In adult animals, continues to be expressed in the nervous system and is also expressed in body wall muscle.

Its subcellular location is the cytoplasm. It is found in the cell cortex. The enzyme catalyses L-seryl-[protein] + ATP = O-phospho-L-seryl-[protein] + ADP + H(+). It catalyses the reaction L-threonyl-[protein] + ATP = O-phospho-L-threonyl-[protein] + ADP + H(+). It carries out the reaction L-tyrosyl-[protein] + ATP = O-phospho-L-tyrosyl-[protein] + ADP + H(+). With respect to regulation, activated during oocyte maturation by phosphorylation on Ser-362 by cdk-1. The pseudotyrosine phosphatases egg-4 and egg-5 sequester activated mbk-2 until the meiotic divisions and inhibit mbk-2 kinase activity directly, using a mixed-inhibition mechanism that does not involve tyrosine dephosphorylation. Required for oocyte-to-zygote transition in which it phosphorylates oocyte proteins, including mei-1, oma-1, oma-2, mex-5, and mex-6, modifying their activity and/or stability following meiosis. Through phosphorylation of P granule components including meg-1, promotes the disassembly of zygotic P granules in the anterior cytoplasm during zygote polarization, and thus plays a role in P granule distribution and segregation in early stage embryos following meiosis. Functions in both spindle positioning and in the posterior localization of cytoplasmic determinants, including pie-1, pos-1, and pgl-1, in early embryos. Involved in the asymmetric distribution of plk-1 at the 2-cell embryonic stage. This is Dual specificity tyrosine-phosphorylation-regulated kinase mbk-2 from Caenorhabditis elegans.